The following is a 297-amino-acid chain: HTH-type transcriptional regulator ArgP (297 aa).

The region spanning 4–60 (PDYRTLQALDAVIRERGFERAAQKLCITQSAVSQRIKQLENMFGQPLLVRTVPPRPT) is the HTH lysR-type domain. A DNA-binding region (H-T-H motif) is located at residues 21–40 (FERAAQKLCITQSAVSQRIK).

It belongs to the LysR transcriptional regulatory family. Homodimer.

Its function is as follows. Controls the transcription of genes involved in arginine and lysine metabolism. This is HTH-type transcriptional regulator ArgP from Klebsiella pneumoniae subsp. pneumoniae (strain ATCC 700721 / MGH 78578).